The sequence spans 142 residues: Coactosin-like protein (142 aa).

Ala2 carries the N-acetylalanine modification. The ADF-H domain maps to 2 to 130 (ATKIDKEACR…EEDFIKSELK (129 aa)). Residues 66 to 75 (TGDAMSKRSK) are flexible and important for F-actin binding. An N6-acetyllysine mark is found at Lys102 and Lys126.

This sequence belongs to the actin-binding proteins ADF family. Coactosin subfamily. Interacts with 5-lipoxygenase (ALOX5/5LO) in a calcium-independent manner. Binds to F-actin with a stoichiometry of 1:2. In terms of tissue distribution, widely expressed with highest levels in placenta, lung, kidney and peripheral blood leukocytes and lower levels in brain, liver and pancreas.

It localises to the cytoplasm. Its subcellular location is the cytoskeleton. The protein resides in the nucleus. Functionally, binds to F-actin in a calcium-independent manner. Has no direct effect on actin depolymerization. Acts as a chaperone for ALOX5 (5LO), influencing both its stability and activity in leukotrienes synthesis. In Homo sapiens (Human), this protein is Coactosin-like protein (COTL1).